A 500-amino-acid chain; its full sequence is Beta-glucosidase 2 (500 aa).

Positions 1–24 (MGAAAAAGFFFVLLFLSVQGGAVG) are cleaved as a signal peptide. Residues Q44 and H144 each contribute to the a beta-D-glucoside site. Residue E190 is the Proton donor of the active site. C209 and C218 form a disulfide bridge. A glycan (N-linked (GlcNAc...) asparagine) is linked at N222. Residues Y334 and E403 each coordinate a beta-D-glucoside. E403 acts as the Nucleophile in catalysis. The N-linked (GlcNAc...) asparagine glycan is linked to N410. Position 445 (W445) interacts with a beta-D-glucoside.

The protein belongs to the glycosyl hydrolase 1 family.

The catalysed reaction is Hydrolysis of terminal, non-reducing beta-D-glucosyl residues with release of beta-D-glucose.. The protein is Beta-glucosidase 2 (BGLU2) of Oryza sativa subsp. japonica (Rice).